Consider the following 157-residue polypeptide: uncharacterized protein (157 aa).

Residues 33 to 134 enclose the HD domain; it reads NLKHFLDVAR…MYRADKLSRL (102 aa).

This is an uncharacterized protein from Clostridium beijerinckii (strain ATCC 51743 / NCIMB 8052) (Clostridium acetobutylicum).